Consider the following 568-residue polypeptide: Sphingosine-1-phosphate lyase 1 (568 aa).

At 1-40 (MPGTDLLKLKDFEPYLEILESYSTKAKNYVNGYCTKYEPW) the chain is on the lumenal side. The chain crosses the membrane as a helical; Signal-anchor for type III membrane protein span at residues 41-61 (QLIAWSVLCTLLIVWVYELIF). Residues 62 to 568 (QPESLWSRFK…NQMNGSPKPR (507 aa)) lie on the Cytoplasmic side of the membrane. N6-(pyridoxal phosphate)lysine; alternate is present on Lys-353. The residue at position 353 (Lys-353) is an N6-acetyllysine; alternate. 3'-nitrotyrosine occurs at positions 356 and 366. At Ser-564 the chain carries Phosphoserine.

The protein belongs to the group II decarboxylase family. Sphingosine-1-phosphate lyase subfamily. Pyridoxal 5'-phosphate serves as cofactor. Highest levels are found in liver, small intestine and thymus, followed by kidney, lung, heart, spleen and brain (at protein level). Also detected in stomach, testis and skeletal muscle (at protein level).

Its subcellular location is the endoplasmic reticulum membrane. The catalysed reaction is sphinganine 1-phosphate = hexadecanal + phosphoethanolamine. It carries out the reaction sphing-4-enine 1-phosphate = (2E)-hexadecenal + phosphoethanolamine. The protein operates within lipid metabolism; sphingolipid metabolism. Functionally, cleaves phosphorylated sphingoid bases (PSBs), such as sphingosine-1-phosphate, into fatty aldehydes and phosphoethanolamine. Elevates stress-induced ceramide production and apoptosis. Required for global lipid homeostasis in liver and cholesterol homeostasis in fibroblasts. Involved in the regulation of pro-inflammatory response and neutrophil trafficking. Modulates neuronal autophagy via phosphoethanolamine production which regulates accumulation of aggregate-prone proteins such as APP. Seems to play a role in establishing neuronal contact sites and axonal maintenance. This is Sphingosine-1-phosphate lyase 1 from Mus musculus (Mouse).